Reading from the N-terminus, the 842-residue chain is MAKKKIKRRGKMPPNIFDTGGQSWGQQSSGQFSNAFKGENLGNSIGSIGGAVGGIAQAGISNAQIADTSGIEAQNKAQKNMVVGASSNDDLMSEWGSWNKVKDDYSWKDVRGGSTGQRVTNTIGAAGQGAAAGASVGGPIGAIVGGVVGLGSAIGGWLGGNRKAKRKAKKLNKEAKEANERALTSFETRADNIDTQNDFNMLANFSAYGGPLEFGSGAIGYEFDNRYLNNQEMSAVAKQRLTSLPNSFQALPEMNTYNAFAEGGGLSREKNYGSKKKPYPSVPSGDFAGPHRSYPIPTKADARDALRLAGLHGNESVRRKVLAKYPSLKAFGGSLFDSVVGNNFNQSFTQGIQGMFQQEPEQTVQAANIAKDGGDIKIKEKNKGKFTAYCGGKVTEACIRKGKNSSNPTTRKRATFAQNARNWNAFGGWLNTQGGDFTNGVTFINEGGSHEENPYQGIQIGVDPEGAPNLVEQGEVVYDDYVFSDRMEIPDDIRKEYKLRGKTFAKAAKSAQRESEERPNDPLSTKGLQAAMERIATAQEEARQRKEAHREGNEYPSMFAYGGDTNPYGLALEDPMSVEELEALMVQSGETGEIAPEGNNGNRQTWTRYAPIIGSGLASLSDLFSKPDYDSADLISGVDLGAEAVGYAPIGNYLSYRPLDRDFYINKMNQQAAATRRGLMNTSGGNRLNAQAGILAADYNYGQNMGNLARQAEEYNQQLRERVEAFNRGTNMFNTETGLKASMFNAESRNAAKRARLGQATTVAQLRQGIKDQDAARRSANITNFLQGLGDMGWENEQANWLDTLAKSGVLKMNTKGEYTGGTKKAKGGKVRTKKKKGLTYG.

The span at 1–11 (MAKKKIKRRGK) shows a compositional bias: basic residues. The segment at 1-29 (MAKKKIKRRGKMPPNIFDTGGQSWGQQSS) is disordered. Residues 20-29 (GGQSWGQQSS) are compositionally biased toward low complexity. The helical transmembrane segment at 140–160 (IGAIVGGVVGLGSAIGGWLGG) threads the bilayer. The interaction with the portal protein stretch occupies residues 425–552 (AFGGWLNTQG…RQRKEAHREG (128 aa)). The segment at 817 to 842 (GEYTGGTKKAKGGKVRTKKKKGLTYG) is disordered. Residues 824-842 (KKAKGGKVRTKKKKGLTYG) show a composition bias toward basic residues.

As to quaternary structure, homododecamer. Interacts with the portal protein.

It localises to the virion. The protein localises to the host membrane. Its function is as follows. Protein that is stored in high quantity in the viral capsid and may play a role during ejection. The protein is Cargo protein 1 of Bacteroides phage crAss001 (Bacteroides phage PhiCrAss001).